A 452-amino-acid chain; its full sequence is Putative zinc metalloprotease VC_2253 (452 aa).

His-22 is a Zn(2+) binding site. Glu-23 is a catalytic residue. His-26 contributes to the Zn(2+) binding site. The helical transmembrane segment at 98-120 (SAIVSAGPIFNFLFAIFAYWLVF) threads the bilayer. Residues 197–292 (NLRDWNFDPE…QVELTLIPDS (96 aa)) enclose the PDZ domain. 2 helical membrane-spanning segments follow: residues 378-400 (FVYF…LVPL) and 428-447 (MGYR…AIFN).

This sequence belongs to the peptidase M50B family. Requires Zn(2+) as cofactor.

It is found in the cell inner membrane. The protein is Putative zinc metalloprotease VC_2253 of Vibrio cholerae serotype O1 (strain ATCC 39315 / El Tor Inaba N16961).